Consider the following 380-residue polypeptide: Cystathionine gamma-synthase (380 aa).

N6-(pyridoxal phosphate)lysine is present on lysine 195.

This sequence belongs to the trans-sulfuration enzymes family. Homotetramer. The cofactor is pyridoxal 5'-phosphate.

It localises to the cytoplasm. The catalysed reaction is O-succinyl-L-homoserine + L-cysteine = L,L-cystathionine + succinate + H(+). Functionally, catalyzes the formation of L-cystathionine from O-succinyl-L-homoserine (OSHS) and L-cysteine, via a gamma-replacement reaction. In the absence of thiol, catalyzes gamma-elimination to form 2-oxobutanoate, succinate and ammonia. The protein is Cystathionine gamma-synthase (metB) of Helicobacter pylori (strain J99 / ATCC 700824) (Campylobacter pylori J99).